The following is a 427-amino-acid chain: UPF0229 protein YeaH (427 aa).

The interval 87-110 is disordered; it reads RIERSQGGGGGSGSGQGQASQDGE. Residues 92–102 are compositionally biased toward gly residues; that stretch reads QGGGGGSGSGQ.

It belongs to the UPF0229 family.

The polypeptide is UPF0229 protein YeaH (Escherichia coli O6:K15:H31 (strain 536 / UPEC)).